We begin with the raw amino-acid sequence, 334 residues long: Holliday junction branch migration complex subunit RuvB (334 aa).

The large ATPase domain (RuvB-L) stretch occupies residues 4–184; sequence ADRIISASPK…FGIVQRLEFY (181 aa). ATP contacts are provided by residues Ile23, Arg24, Gly65, Lys68, Thr69, Thr70, 131–133, Arg174, Tyr184, and Arg221; that span reads EDY. Thr69 contributes to the Mg(2+) binding site. A small ATPAse domain (RuvB-S) region spans residues 185–255; the sequence is SVDDLTSIVK…IAKQALAMLD (71 aa). The interval 258-334 is head domain (RuvB-H); it reads SEGFDFMDIK…YAHLGIAKLD (77 aa). Residues Arg294, Arg313, and Arg318 each coordinate DNA.

The protein belongs to the RuvB family. As to quaternary structure, homohexamer. Forms an RuvA(8)-RuvB(12)-Holliday junction (HJ) complex. HJ DNA is sandwiched between 2 RuvA tetramers; dsDNA enters through RuvA and exits via RuvB. An RuvB hexamer assembles on each DNA strand where it exits the tetramer. Each RuvB hexamer is contacted by two RuvA subunits (via domain III) on 2 adjacent RuvB subunits; this complex drives branch migration. In the full resolvosome a probable DNA-RuvA(4)-RuvB(12)-RuvC(2) complex forms which resolves the HJ.

It localises to the cytoplasm. It catalyses the reaction ATP + H2O = ADP + phosphate + H(+). Its function is as follows. The RuvA-RuvB-RuvC complex processes Holliday junction (HJ) DNA during genetic recombination and DNA repair, while the RuvA-RuvB complex plays an important role in the rescue of blocked DNA replication forks via replication fork reversal (RFR). RuvA specifically binds to HJ cruciform DNA, conferring on it an open structure. The RuvB hexamer acts as an ATP-dependent pump, pulling dsDNA into and through the RuvAB complex. RuvB forms 2 homohexamers on either side of HJ DNA bound by 1 or 2 RuvA tetramers; 4 subunits per hexamer contact DNA at a time. Coordinated motions by a converter formed by DNA-disengaged RuvB subunits stimulates ATP hydrolysis and nucleotide exchange. Immobilization of the converter enables RuvB to convert the ATP-contained energy into a lever motion, pulling 2 nucleotides of DNA out of the RuvA tetramer per ATP hydrolyzed, thus driving DNA branch migration. The RuvB motors rotate together with the DNA substrate, which together with the progressing nucleotide cycle form the mechanistic basis for DNA recombination by continuous HJ branch migration. Branch migration allows RuvC to scan DNA until it finds its consensus sequence, where it cleaves and resolves cruciform DNA. This chain is Holliday junction branch migration complex subunit RuvB, found in Actinobacillus pleuropneumoniae serotype 5b (strain L20).